The primary structure comprises 241 residues: MILTIDVGNTRIKSAVFKYNTIIETAFFSNKNFQSEIENILNLNNKIKVLVVASVGKLEKEAFELFSNRVYVCFISRESTFPFQNNYATQSTLGIDRMVLSAGAVFQFPKKNRLIIDAGTCLTYDFVDENDVYQGGAISPGIRLRYEVMHNYTAKLPLLTLQEPQSLIGNTTNQSLHSGVVNGLTFEIEGYIEAVRGKNENFIIILTGGDANFLAKRLKNTIFANSNFLLESLNNLYQYQK.

Residue 6-13 coordinates ATP; sequence DVGNTRIK. 94–97 provides a ligand contact to substrate; that stretch reads GIDR. The Proton acceptor role is filled by D96. D117 is a K(+) binding site. Residue T120 coordinates ATP. A substrate-binding site is contributed by T172.

This sequence belongs to the type III pantothenate kinase family. Homodimer. The cofactor is NH4(+). It depends on K(+) as a cofactor.

It localises to the cytoplasm. The catalysed reaction is (R)-pantothenate + ATP = (R)-4'-phosphopantothenate + ADP + H(+). It participates in cofactor biosynthesis; coenzyme A biosynthesis; CoA from (R)-pantothenate: step 1/5. In terms of biological role, catalyzes the phosphorylation of pantothenate (Pan), the first step in CoA biosynthesis. In Flavobacterium psychrophilum (strain ATCC 49511 / DSM 21280 / CIP 103535 / JIP02/86), this protein is Type III pantothenate kinase.